The chain runs to 297 residues: Homoserine kinase (297 aa).

Residue 84 to 94 participates in ATP binding; it reads PPARGLGSSAT.

The protein belongs to the GHMP kinase family. Homoserine kinase subfamily.

The protein resides in the cytoplasm. The catalysed reaction is L-homoserine + ATP = O-phospho-L-homoserine + ADP + H(+). Its pathway is amino-acid biosynthesis; L-threonine biosynthesis; L-threonine from L-aspartate: step 4/5. Its function is as follows. Catalyzes the ATP-dependent phosphorylation of L-homoserine to L-homoserine phosphate. In Aquifex aeolicus (strain VF5), this protein is Homoserine kinase (thrB).